Consider the following 216-residue polypeptide: Adenylate kinase (216 aa).

Glycine 10 to threonine 15 serves as a coordination point for ATP. An NMP region spans residues serine 30–valine 59. AMP is bound by residues threonine 31, arginine 36, leucine 57–valine 59, glycine 85–arginine 88, and glutamine 92. The interval glycine 126–aspartate 163 is LID. Arginine 127 contacts ATP. Positions 130 and 133 each coordinate Zn(2+). Threonine 136–tyrosine 137 serves as a coordination point for ATP. 2 residues coordinate Zn(2+): cysteine 150 and cysteine 153. Residues arginine 160 and arginine 171 each contribute to the AMP site. Residue glutamine 199 participates in ATP binding.

This sequence belongs to the adenylate kinase family. Monomer.

It is found in the cytoplasm. The enzyme catalyses AMP + ATP = 2 ADP. It functions in the pathway purine metabolism; AMP biosynthesis via salvage pathway; AMP from ADP: step 1/1. Its function is as follows. Catalyzes the reversible transfer of the terminal phosphate group between ATP and AMP. Plays an important role in cellular energy homeostasis and in adenine nucleotide metabolism. The polypeptide is Adenylate kinase (Clostridioides difficile (strain 630) (Peptoclostridium difficile)).